The primary structure comprises 215 residues: S-crystallin 2 (215 aa).

The GST N-terminal domain maps to 2-80 (PSYTLNYFNH…YLAREFGFHG (79 aa)). The region spanning 82 to 215 (NNMEMARVEY…YLKKRSSTEF (134 aa)) is the GST C-terminal domain.

Belongs to the GST superfamily. Lens.

In terms of biological role, S-crystallins are structural components of squids and octopi eye lens. Contains relatively little if any GST activity. The polypeptide is S-crystallin 2 (Enteroctopus dofleini (North Pacific giant octopus)).